The sequence spans 247 residues: Uridylate kinase (247 aa).

16-19 (KLSG) provides a ligand contact to ATP. Gly-58 is a binding site for UMP. Residues Gly-59 and Arg-63 each contribute to the ATP site. Residues Asp-78 and 139–146 (TGNPFFTT) each bind UMP. ATP-binding residues include Thr-166, Tyr-172, and Asp-175.

It belongs to the UMP kinase family. As to quaternary structure, homohexamer.

The protein resides in the cytoplasm. It carries out the reaction UMP + ATP = UDP + ADP. It functions in the pathway pyrimidine metabolism; CTP biosynthesis via de novo pathway; UDP from UMP (UMPK route): step 1/1. With respect to regulation, inhibited by UTP. In terms of biological role, catalyzes the reversible phosphorylation of UMP to UDP. This is Uridylate kinase from Xylella fastidiosa (strain Temecula1 / ATCC 700964).